The sequence spans 183 residues: Putative manganese efflux pump MntP 1 (183 aa).

6 consecutive transmembrane segments (helical) span residues 6-26, 36-56, 64-84, 100-120, 130-150, and 158-178; these read LFLL…CIGI, MIFV…GGYI, IVPI…ILMI, IMYL…GFTT, LFMS…LGII, and ISII…LFGL.

It belongs to the MntP (TC 9.B.29) family.

It localises to the cell membrane. Functionally, probably functions as a manganese efflux pump. The chain is Putative manganese efflux pump MntP 1 from Clostridium botulinum (strain Hall / ATCC 3502 / NCTC 13319 / Type A).